Here is a 191-residue protein sequence, read N- to C-terminus: MDKTLSREEAKQLMQLLCLDMSCWGNLPLMRRQYLVKCKEYHPDKGGNEESMKLLNSLYLKLQDSVSSVHDLNEEEDNIWQSSQVYCKDLCCNKFRLVGAIYGDYYEAYIMKQWDVCIHGYNHECQCIHCILSKYHKEKYKIYRKPPVWIECYCYKCYREWFFFPISMQTFFFWKVIIFNTEIRAVQPLLR.

The residue at position 1 (Met1) is an N-acetylmethionine; by host. The J domain occupies 12 to 80; sequence QLMQLLCLDM…DLNEEEDNIW (69 aa). The C4-type; atypical zinc-finger motif lies at 117-130; the sequence is CIHGYNHECQCIHC. The segment at 136–157 adopts an H1C3-type; atypical zinc-finger fold; the sequence is HKEKYKIYRKPPVWIECYCYKC.

In terms of assembly, interacts with host PPP2R1A; the interaction inhibits PP2A activity.

The protein resides in the host cytoplasm. Its subcellular location is the host nucleus. In terms of biological role, promotes efficient viral genome replication by accelerating both G1 and S phase progression of the cell cycle. Inhibits host PP2A by binding to the A subunit, thereby displacing lower affinity regulatory B subunit. Inactivation of PP2A in turn results in the transactivation of cyclin A and cyclin D1 promoters. Late during the infection cycle, ST may induce dephosphorylation of host MTOR, leading to the inhibition of cap-dependent translation. May establish and maintain high levels of viral genomes during persistent infection in cell culture. This chain is Small t antigen, found in KI polyomavirus (isolate Stockholm 380) (KIPyV).